A 183-amino-acid chain; its full sequence is Peptide deformylase (183 aa).

The Fe cation site is built by Cys-110 and His-153. Glu-154 is a catalytic residue. Residue His-157 coordinates Fe cation.

This sequence belongs to the polypeptide deformylase family. The cofactor is Fe(2+).

It carries out the reaction N-terminal N-formyl-L-methionyl-[peptide] + H2O = N-terminal L-methionyl-[peptide] + formate. In terms of biological role, removes the formyl group from the N-terminal Met of newly synthesized proteins. Requires at least a dipeptide for an efficient rate of reaction. N-terminal L-methionine is a prerequisite for activity but the enzyme has broad specificity at other positions. This Listeria monocytogenes serotype 4a (strain HCC23) protein is Peptide deformylase.